The primary structure comprises 520 residues: Transactivator/viroplasmin protein (520 aa).

A disordered region spans residues 487–520; that stretch reads KDASADSGPKDGPPPTRSIVEKEDVPTTSSKQVD.

This sequence belongs to the caulimoviridae viroplasmin family.

It is found in the host cytoplasm. Enhances the ribosomal termination-reinitiation event leading to the translation of major open reading frames on the polycistronic viral RNAs. The polypeptide is Transactivator/viroplasmin protein (Arabidopsis thaliana (Mouse-ear cress)).